A 20-amino-acid polypeptide reads, in one-letter code: VNPIILGVLPKFVCLITKKC.

Cys-14 and Cys-20 are disulfide-bonded.

The protein belongs to the frog skin active peptide (FSAP) family. Brevinin subfamily. As to expression, expressed by the skin glands.

It is found in the secreted. Antibacterial activity against representative Gram-negative and Gram-positive bacteria and exhibits a very high hemolytic activity. This is Brevinin-1T from Rana temporaria (European common frog).